Here is a 211-residue protein sequence, read N- to C-terminus: Pyridoxine/pyridoxamine 5'-phosphate oxidase (211 aa).

Substrate-binding positions include 7–10 (RREY) and K65. Residues 60-65 (RIVLLK), 75-76 (YT), R81, K82, and Q104 each bind FMN. Substrate is bound by residues Y122, R126, and S130. Residues 139 to 140 (QS) and W184 contribute to the FMN site. 190–192 (RLH) lines the substrate pocket. R194 serves as a coordination point for FMN.

The protein belongs to the pyridoxamine 5'-phosphate oxidase family. Homodimer. FMN serves as cofactor.

It carries out the reaction pyridoxamine 5'-phosphate + O2 + H2O = pyridoxal 5'-phosphate + H2O2 + NH4(+). The enzyme catalyses pyridoxine 5'-phosphate + O2 = pyridoxal 5'-phosphate + H2O2. The protein operates within cofactor metabolism; pyridoxal 5'-phosphate salvage; pyridoxal 5'-phosphate from pyridoxamine 5'-phosphate: step 1/1. It participates in cofactor metabolism; pyridoxal 5'-phosphate salvage; pyridoxal 5'-phosphate from pyridoxine 5'-phosphate: step 1/1. In terms of biological role, catalyzes the oxidation of either pyridoxine 5'-phosphate (PNP) or pyridoxamine 5'-phosphate (PMP) into pyridoxal 5'-phosphate (PLP). The sequence is that of Pyridoxine/pyridoxamine 5'-phosphate oxidase from Vibrio cholerae serotype O1 (strain ATCC 39541 / Classical Ogawa 395 / O395).